Consider the following 532-residue polypeptide: Monolignol oxidoreductase AtBBE-like 15 (532 aa).

A signal peptide spans 1 to 27 (MAFAISKRNATLFLVTLLLISVPLSSS). C36 and C100 are disulfide-bonded. N-linked (GlcNAc...) asparagine glycosylation occurs at N57. One can recognise an FAD-binding PCMH-type domain in the interval 76-254 (TPSNPKPVFI…LAWKIKLVPV (179 aa)). Residues 115 to 179 (HDYEGLSFVA…QTHGFPAGLC (65 aa)) constitute a cross-link (6-(S-cysteinyl)-8alpha-(pros-histidyl)-FAD (His-Cys)). N-linked (GlcNAc...) asparagine glycans are attached at residues N306 and N431.

This sequence belongs to the oxygen-dependent FAD-linked oxidoreductase family. It depends on FAD as a cofactor. Post-translationally, the FAD cofactor is bound via a bicovalent 6-S-cysteinyl, 8alpha-N1-histidyl FAD linkage. As to expression, expressed in sepals and stamen.

It localises to the secreted. The protein resides in the cell wall. It carries out the reaction (E)-4-coumaroyl alcohol + A = (E)-4-coumaraldehyde + AH2. It catalyses the reaction (E)-coniferol + A = (E)-coniferaldehyde + AH2. The catalysed reaction is (E)-sinapyl alcohol + A = (E)-sinapaldehyde + AH2. The enzyme catalyses 4-O-(beta-D-glucosyl)-(E)-coniferol + A = 4-O-(beta-D-glucosyl)-4-(E)-coniferyl aldehyde + AH2. Functionally, required for endosperm development and polar nuclei fusion. Mediates oxidation of p-hydroxylated derivatives of cinnamyl alcohol (i.e. the monolignols p-coumaryl-, coniferyl-, and sinapyl alcohol) to their corresponding aldehydes. Can also use the beta-O-glycosylated form of coniferyl alcohol (coniferin) as substrate, but is much less efficient towards cinnamyl alcohol. The electron acceptor required for these reactions is not known, but does not seem to be dioxygen. The chain is Monolignol oxidoreductase AtBBE-like 15 from Arabidopsis thaliana (Mouse-ear cress).